Consider the following 399-residue polypeptide: Methylthioribose kinase (399 aa).

ATP is bound by residues asparagine 40, lysine 57, and 111 to 113 (EDL). Aspartate 229 contacts substrate. 246–248 (DAE) is an ATP binding site. Substrate is bound at residue arginine 344.

The protein belongs to the methylthioribose kinase family. As to quaternary structure, homodimer.

The catalysed reaction is 5-(methylsulfanyl)-D-ribose + ATP = 5-(methylsulfanyl)-alpha-D-ribose 1-phosphate + ADP + H(+). It participates in amino-acid biosynthesis; L-methionine biosynthesis via salvage pathway; S-methyl-5-thio-alpha-D-ribose 1-phosphate from S-methyl-5'-thioadenosine (hydrolase route): step 2/2. Catalyzes the phosphorylation of methylthioribose into methylthioribose-1-phosphate. This Enterobacter sp. (strain 638) protein is Methylthioribose kinase.